We begin with the raw amino-acid sequence, 352 residues long: Ion-translocating oxidoreductase complex subunit D (352 aa).

Transmembrane regions (helical) follow at residues 20-40 (IMLL…WFFG), 42-62 (GTLV…ALVL), 68-88 (PIAA…LAVS), 89-109 (IPPL…VIIA), and 123-143 (PAMI…TNWL). The residue at position 187 (threonine 187) is an FMN phosphoryl threonine. 5 consecutive transmembrane segments (helical) span residues 217 to 237 (GAGW…LLAI), 244 to 264 (IPVS…LFAP), 267 to 287 (LASP…FFIL), 301 to 321 (LIFG…GGYP), and 322 to 342 (DGVA…DYYT).

The protein belongs to the NqrB/RnfD family. As to quaternary structure, the complex is composed of six subunits: RsxA, RsxB, RsxC, RsxD, RsxE and RsxG. Requires FMN as cofactor.

Its subcellular location is the cell inner membrane. Part of a membrane-bound complex that couples electron transfer with translocation of ions across the membrane. Required to maintain the reduced state of SoxR. In Escherichia fergusonii (strain ATCC 35469 / DSM 13698 / CCUG 18766 / IAM 14443 / JCM 21226 / LMG 7866 / NBRC 102419 / NCTC 12128 / CDC 0568-73), this protein is Ion-translocating oxidoreductase complex subunit D.